A 188-amino-acid polypeptide reads, in one-letter code: Inosine triphosphate pyrophosphatase (188 aa).

7–12 (TGNAGK) provides a ligand contact to ITP. Glutamate 36 lines the Mg(2+) pocket. Residues lysine 48, 64-65 (DT), lysine 81, 140-143 (FGWN), lysine 163, and 168-169 (HR) contribute to the ITP site.

This sequence belongs to the HAM1 NTPase family. Homodimer. Mg(2+) serves as cofactor. Requires Mn(2+) as cofactor.

It is found in the cytoplasm. The protein resides in the nucleus. It catalyses the reaction ITP + H2O = IMP + diphosphate + H(+). The catalysed reaction is dITP + H2O = dIMP + diphosphate + H(+). It carries out the reaction XTP + H2O = XMP + diphosphate + H(+). Pyrophosphatase that hydrolyzes non-canonical purine nucleotides such as inosine triphosphate (ITP), deoxyinosine triphosphate (dITP) or xanthosine 5'-triphosphate (XTP) to their respective monophosphate derivatives. The enzyme does not distinguish between the deoxy- and ribose forms. Probably excludes non-canonical purines from RNA and DNA precursor pools, thus preventing their incorporation into RNA and DNA and avoiding chromosomal lesions. This chain is Inosine triphosphate pyrophosphatase, found in Yarrowia lipolytica (strain CLIB 122 / E 150) (Yeast).